Here is a 37-residue protein sequence, read N- to C-terminus: Bacteriocin lactococcin MMFII (37 aa).

Cysteine 9 and cysteine 14 are disulfide-bonded.

It localises to the secreted. In terms of biological role, bacteriocin active against Listeria monocytogenes and Lactococcus cremoris. The sequence is that of Bacteriocin lactococcin MMFII from Lactococcus lactis subsp. lactis (Streptococcus lactis).